The sequence spans 488 residues: MACSVDTLAPFLGPNTTNAVAAASYICNQFSGVSDRFVDTGYAIDSTYLLFSAYLVFSMQLGFAMLLAGSVRNTMNIMLTNVLDAAAGGLFYYLFGFAFALGGPSNGFIGRHFFGLKEIPSNSFDYMNFLYQWAFAIAAAGITSGSIAERTQFVAYLIYSSFLTGFVYPVVSHWFWTPDGWASPTNSNLLFGSGVIDFAGSGVVHMVGGIAGFYGALIEGPRIGRYDHTGRSVALRGHSASLVVLGTFLLWFGWYGFNPGSFNKILVTYGASGGYYGQWSAVGRTAVTTTLAGCTAALTTLFGKRILSGHWNVTDVCNGLLGGFAAITAGCSVVEPWAAIICGFVAALVLIGFNMLAEKFKYDDPLEAAQLHGGCGAWGIIFTGLFAKGEFVDQVYPGKPGRPHGLFMGGGGKLLGAHIIQILVIIGWVSATMGPLFYILHKFKLLRISSEDEMAGMDLTRHGGFAYYHEEDPKLGMQMRRIEPTTST.

The next 11 helical transmembrane spans lie at 47-69 (TYLL…LLAG), 90-109 (LFYY…NGFI), 129-148 (FLYQ…GSIA), 153-175 (FVAY…SHWF), 195-217 (VIDF…YGAL), 238-257 (HSAS…WYGF), 281-303 (AVGR…TLFG), 316-333 (VCNG…GCSV), 337-356 (WAAI…FNML), 368-387 (AAQL…GLFA), and 418-440 (HIIQ…FYIL).

This sequence belongs to the ammonia transporter channel (TC 1.A.11.2) family. Root hairs and leaves.

It is found in the membrane. Its function is as follows. Ammonium transporter that may be involved in ammonium uptake from the soil. This Solanum lycopersicum (Tomato) protein is Ammonium transporter 1 member 1 (AMT1-1).